The chain runs to 130 residues: MAKPIPRIGSRRNGRRIPKGVIHVQASFNNTIVTVTDVRGRVVSWSSAGTCGFRGTRRGTPFAAQTAAGNAIRTVVDQGMQRAEVMIKGPGLGRDAALRAIRRSGILLSFVRDVTPMPHNGCRPPKKRRV.

Belongs to the universal ribosomal protein uS11 family. In terms of assembly, part of the 30S ribosomal subunit.

Its subcellular location is the plastid. The protein resides in the chloroplast. This Drimys granadensis protein is Small ribosomal subunit protein uS11c.